The following is a 153-amino-acid chain: Pheromone-binding protein Gp-9 (153 aa).

An N-terminal signal peptide occupies residues 1–19 (MKTFVLHIFIFALVAFASA). 3 disulfide bridges follow: Cys37/Cys77, Cys73/Cys129, and Cys118/Cys138.

The protein belongs to the PBP/GOBP family. In terms of assembly, homodimer.

Its subcellular location is the secreted. In terms of biological role, colony queen number, a major feature of social organization, is associated with worker genotype for Gp-9. Colonies are headed by either a single reproductive queen (monogyne form) or multiple queens (polygyne form). Differences in worker Gp-9 genotypes between social forms may cause differences in workers' abilities to recognize queens and regulate their numbers. The sequence is that of Pheromone-binding protein Gp-9 from Solenopsis saevissima (Fire ant).